The primary structure comprises 611 residues: Phosphomethylpyrimidine synthase (611 aa).

Substrate is bound by residues asparagine 212, methionine 241, tyrosine 270, histidine 306, 326–328 (SRG), 367–370 (DGLR), and glutamate 406. Histidine 410 contributes to the Zn(2+) binding site. Tyrosine 433 contributes to the substrate binding site. Residue histidine 474 coordinates Zn(2+). Cysteine 554, cysteine 557, and cysteine 562 together coordinate [4Fe-4S] cluster.

This sequence belongs to the ThiC family. In terms of assembly, homodimer. Requires [4Fe-4S] cluster as cofactor.

The catalysed reaction is 5-amino-1-(5-phospho-beta-D-ribosyl)imidazole + S-adenosyl-L-methionine = 4-amino-2-methyl-5-(phosphooxymethyl)pyrimidine + CO + 5'-deoxyadenosine + formate + L-methionine + 3 H(+). Its pathway is cofactor biosynthesis; thiamine diphosphate biosynthesis. Catalyzes the synthesis of the hydroxymethylpyrimidine phosphate (HMP-P) moiety of thiamine from aminoimidazole ribotide (AIR) in a radical S-adenosyl-L-methionine (SAM)-dependent reaction. The polypeptide is Phosphomethylpyrimidine synthase (Bartonella bacilliformis (strain ATCC 35685 / KC583 / Herrer 020/F12,63)).